A 149-amino-acid chain; its full sequence is Oligosaccharyltransferase complex subunit ostc-A (149 aa).

Topologically, residues 1 to 32 (MESLYRVPFTVLECPNLKLKKPSWLHMPSAMT) are cytoplasmic. The chain crosses the membrane as a helical span at residues 33–53 (VYAMVVVSYFLITGGIIYDVI). Residues 54–83 (VEPPSVGSMTDEHGHQRPVAFLAYRVNGQY) lie on the Extracellular side of the membrane. The helical transmembrane segment at 84 to 104 (IMEGLASSFLFTMGGLGFIIL) threads the bilayer. Over 105–117 (DRSNTPNIPKLNR) the chain is Cytoplasmic. A helical transmembrane segment spans residues 118-138 (FLLLFIGFVCVLLSFFMARVF). The Extracellular portion of the chain corresponds to 139-149 (MRMKLPGYLMG).

The protein belongs to the OSTC family. Specific component of the STT3A-containing form of the oligosaccharyltransferase (OST) complex.

The protein localises to the membrane. It functions in the pathway protein modification; protein glycosylation. Its function is as follows. Specific component of the STT3A-containing form of the oligosaccharyl transferase (OST) complex that catalyzes the initial transfer of a defined glycan (Glc(3)Man(9)GlcNAc(2) in eukaryotes) from the lipid carrier dolichol-pyrophosphate to an asparagine residue within an Asn-X-Ser/Thr consensus motif in nascent polypeptide chains, the first step in protein N-glycosylation. N-glycosylation occurs cotranslationally and the complex associates with the Sec61 complex at the channel-forming translocon complex that mediates protein translocation across the endoplasmic reticulum (ER). All subunits are required for a maximal enzyme activity. This chain is Oligosaccharyltransferase complex subunit ostc-A, found in Xenopus laevis (African clawed frog).